We begin with the raw amino-acid sequence, 415 residues long: Probable glucuronosyltransferase Os03g0287800 (415 aa).

The Cytoplasmic segment spans residues 1-25 (MGSSTDHGGAGGRGKKGSGSQLWKK). The helical; Signal-anchor for type II membrane protein transmembrane segment at 26–43 (ALLHSSLCFVMGFFTGFA) threads the bilayer. At 44–415 (PSSVSDWTSA…GGRFLSGDFC (372 aa)) the chain is on the lumenal side. N-linked (GlcNAc...) asparagine glycans are attached at residues Asn78, Asn165, Asn257, and Asn287.

Belongs to the glycosyltransferase 43 family.

It is found in the golgi apparatus membrane. Involved in the synthesis of glucuronoxylan hemicellulose in secondary cell walls. This is Probable glucuronosyltransferase Os03g0287800 from Oryza sativa subsp. japonica (Rice).